The chain runs to 929 residues: Alanine--tRNA ligase (929 aa).

Histidine 619, histidine 623, cysteine 722, and histidine 726 together coordinate Zn(2+).

This sequence belongs to the class-II aminoacyl-tRNA synthetase family. Requires Zn(2+) as cofactor.

The protein resides in the cytoplasm. It catalyses the reaction tRNA(Ala) + L-alanine + ATP = L-alanyl-tRNA(Ala) + AMP + diphosphate. Functionally, catalyzes the attachment of alanine to tRNA(Ala) in a two-step reaction: alanine is first activated by ATP to form Ala-AMP and then transferred to the acceptor end of tRNA(Ala). Also edits incorrectly charged Ser-tRNA(Ala) and Gly-tRNA(Ala) via its editing domain. In Halobacterium salinarum (strain ATCC 29341 / DSM 671 / R1), this protein is Alanine--tRNA ligase.